The sequence spans 321 residues: Outer envelope protein 36, chloroplastic (321 aa).

This sequence belongs to the OEP80 (TC 1.B.33.2) family. As to expression, expressed in germinating seeds.

The protein resides in the plastid. The protein localises to the chloroplast outer membrane. May play a role during plastid development. This chain is Outer envelope protein 36, chloroplastic, found in Arabidopsis thaliana (Mouse-ear cress).